The sequence spans 147 residues: Large ribosomal subunit protein uL13 (147 aa).

The protein belongs to the universal ribosomal protein uL13 family. Part of the 50S ribosomal subunit.

This protein is one of the early assembly proteins of the 50S ribosomal subunit, although it is not seen to bind rRNA by itself. It is important during the early stages of 50S assembly. This is Large ribosomal subunit protein uL13 from Renibacterium salmoninarum (strain ATCC 33209 / DSM 20767 / JCM 11484 / NBRC 15589 / NCIMB 2235).